Reading from the N-terminus, the 381-residue chain is Homoserine O-acetyltransferase (381 aa).

Positions 47 to 359 (NAILICHALT…DKGHDAFLLD (313 aa)) constitute an AB hydrolase-1 domain. The active-site Nucleophile is the S153. Substrate is bound at residue R223. Catalysis depends on residues D320 and H353. D354 is a substrate binding site.

It belongs to the AB hydrolase superfamily. MetX family. In terms of assembly, homodimer.

Its subcellular location is the cytoplasm. The enzyme catalyses L-homoserine + acetyl-CoA = O-acetyl-L-homoserine + CoA. It participates in amino-acid biosynthesis; L-methionine biosynthesis via de novo pathway; O-acetyl-L-homoserine from L-homoserine: step 1/1. In terms of biological role, transfers an acetyl group from acetyl-CoA to L-homoserine, forming acetyl-L-homoserine. The sequence is that of Homoserine O-acetyltransferase from Acidiphilium cryptum (strain JF-5).